A 213-amino-acid polypeptide reads, in one-letter code: Ribonuclease T (213 aa).

Positions 28–202 constitute an Exonuclease domain; the sequence is VVVDVETGGF…YDTEQTARLF (175 aa). Mg(2+) contacts are provided by Asp31, Glu33, His189, and Asp194. His189 functions as the Proton donor/acceptor in the catalytic mechanism.

It belongs to the RNase T family. In terms of assembly, homodimer. Requires Mg(2+) as cofactor.

Trims short 3' overhangs of a variety of RNA species, leaving a one or two nucleotide 3' overhang. Responsible for the end-turnover of tRNA: specifically removes the terminal AMP residue from uncharged tRNA (tRNA-C-C-A). Also appears to be involved in tRNA biosynthesis. The chain is Ribonuclease T from Xanthomonas axonopodis pv. citri (strain 306).